The chain runs to 500 residues: Amino-acid acetyltransferase, mitochondrial (500 aa).

Residues methionine 1 to serine 19 constitute a mitochondrion transit peptide. Positions phenylalanine 336–proline 496 constitute an N-acetyltransferase domain.

This sequence belongs to the acetyltransferase family.

It is found in the mitochondrion. The enzyme catalyses L-glutamate + acetyl-CoA = N-acetyl-L-glutamate + CoA + H(+). It functions in the pathway amino-acid biosynthesis; L-arginine biosynthesis; N(2)-acetyl-L-ornithine from L-glutamate: step 1/4. Its function is as follows. N-acetylglutamate synthase involved in arginine biosynthesis. This chain is Amino-acid acetyltransferase, mitochondrial (arg6), found in Schizosaccharomyces pombe (strain 972 / ATCC 24843) (Fission yeast).